The primary structure comprises 31 residues: Cytochrome b6-f complex subunit 6 (31 aa).

The helical transmembrane segment at 4–26 (LTSYFGFLLAALTITSALFIGLS) threads the bilayer.

It belongs to the PetL family. In terms of assembly, the 4 large subunits of the cytochrome b6-f complex are cytochrome b6, subunit IV (17 kDa polypeptide, PetD), cytochrome f and the Rieske protein, while the 4 small subunits are PetG, PetL, PetM and PetN. The complex functions as a dimer.

It localises to the plastid. Its subcellular location is the chloroplast thylakoid membrane. In terms of biological role, component of the cytochrome b6-f complex, which mediates electron transfer between photosystem II (PSII) and photosystem I (PSI), cyclic electron flow around PSI, and state transitions. PetL is important for photoautotrophic growth as well as for electron transfer efficiency and stability of the cytochrome b6-f complex. The protein is Cytochrome b6-f complex subunit 6 of Aethionema grandiflorum (Persian stone-cress).